Consider the following 156-residue polypeptide: Ribosomal RNA large subunit methyltransferase H (156 aa).

S-adenosyl-L-methionine-binding positions include Leu-73, Gly-104, and Leu-123–Leu-128.

Belongs to the RNA methyltransferase RlmH family. In terms of assembly, homodimer.

The protein resides in the cytoplasm. The catalysed reaction is pseudouridine(1915) in 23S rRNA + S-adenosyl-L-methionine = N(3)-methylpseudouridine(1915) in 23S rRNA + S-adenosyl-L-homocysteine + H(+). Functionally, specifically methylates the pseudouridine at position 1915 (m3Psi1915) in 23S rRNA. The polypeptide is Ribosomal RNA large subunit methyltransferase H (Shewanella pealeana (strain ATCC 700345 / ANG-SQ1)).